A 242-amino-acid polypeptide reads, in one-letter code: Transcription factor TCP17 (242 aa).

The region spanning 33 to 91 is the TCP domain; the sequence is GKDRHSKVCTVRGLRDRRIRLSVMTAIQVYDLQERLGLSQPSKVIDWLLEVAKNDVDLL.

As to quaternary structure, interacts with SPL. Expressed in cotyledons, particularly in the vascular region, in leaves, roots, stems, buds, flowers and siliques.

It is found in the nucleus. Its function is as follows. Plays a pivotal role in the control of morphogenesis of shoot organs by negatively regulating the expression of boundary-specific genes such as CUC genes, probably through the induction of miRNA (e.g. miR164). Participates in ovule development. The protein is Transcription factor TCP17 (TCP17) of Arabidopsis thaliana (Mouse-ear cress).